Reading from the N-terminus, the 581-residue chain is Adenine deaminase (581 aa).

Belongs to the metallo-dependent hydrolases superfamily. Adenine deaminase family. It depends on Mn(2+) as a cofactor.

It carries out the reaction adenine + H2O + H(+) = hypoxanthine + NH4(+). This is Adenine deaminase from Brucella melitensis biotype 1 (strain ATCC 23456 / CCUG 17765 / NCTC 10094 / 16M).